A 383-amino-acid polypeptide reads, in one-letter code: Acetylornithine deacetylase (383 aa).

Histidine 80 lines the Zn(2+) pocket. Aspartate 82 is a catalytic residue. Aspartate 112 is a binding site for Zn(2+). Residue glutamate 144 is part of the active site. Residues glutamate 145, glutamate 169, and histidine 355 each coordinate Zn(2+).

It belongs to the peptidase M20A family. ArgE subfamily. As to quaternary structure, homodimer. The cofactor is Zn(2+). Co(2+) serves as cofactor. Glutathione is required as a cofactor.

It localises to the cytoplasm. It carries out the reaction N(2)-acetyl-L-ornithine + H2O = L-ornithine + acetate. The protein operates within amino-acid biosynthesis; L-arginine biosynthesis; L-ornithine from N(2)-acetyl-L-ornithine (linear): step 1/1. Its function is as follows. Catalyzes the hydrolysis of the amide bond of N(2)-acetylated L-amino acids. Cleaves the acetyl group from N-acetyl-L-ornithine to form L-ornithine, an intermediate in L-arginine biosynthesis pathway, and a branchpoint in the synthesis of polyamines. The protein is Acetylornithine deacetylase of Pectobacterium atrosepticum (strain SCRI 1043 / ATCC BAA-672) (Erwinia carotovora subsp. atroseptica).